The chain runs to 281 residues: Pantothenate synthetase (281 aa).

Position 29–36 (methionine 29–histidine 36) interacts with ATP. Residue histidine 36 is the Proton donor of the active site. Glutamine 60 provides a ligand contact to (R)-pantoate. Glutamine 60 is a beta-alanine binding site. Glycine 146 to aspartate 149 contacts ATP. Glutamine 152 provides a ligand contact to (R)-pantoate. Residues valine 175 and methionine 183–arginine 186 contribute to the ATP site.

It belongs to the pantothenate synthetase family. In terms of assembly, homodimer.

The protein resides in the cytoplasm. It catalyses the reaction (R)-pantoate + beta-alanine + ATP = (R)-pantothenate + AMP + diphosphate + H(+). Its pathway is cofactor biosynthesis; (R)-pantothenate biosynthesis; (R)-pantothenate from (R)-pantoate and beta-alanine: step 1/1. Functionally, catalyzes the condensation of pantoate with beta-alanine in an ATP-dependent reaction via a pantoyl-adenylate intermediate. The protein is Pantothenate synthetase of Pseudothermotoga lettingae (strain ATCC BAA-301 / DSM 14385 / NBRC 107922 / TMO) (Thermotoga lettingae).